We begin with the raw amino-acid sequence, 495 residues long: MEHTEKSQVHAEKGLLGKIKRYLSKRPLPSPTDRKKFDQDFAMSTSFHGIHNIAQNQNKVRKVIWLAVVLGSVSLLVWQIYSRLVNYFTWPTTTSIEVQYVEKIEFPAVTLCNLNRFQTEAVSRFGIIFFLWDIVSKVLRLQEISANNTGSPETLDFVTNHQNFSITEFVKNNGFYLNNDTLVHCEFFGKTCSPKDFKHVFTEYGNCFTFNYGENIQNKNKVSVSGRGLKLLLDVHQEEFTDNPVPGFADAGVIFVIHSPKKEPQFDGLGLSSPVGMHARVTIRQLKTVHQEYPWGECNPNIKLRNFITYSTYGCLKECKARHIQRLCGCLPFLLPGNGVECDLLEYYNCVSPILDHIERKGLCTMGTHNSSCPVSCEETEYPATVSYSTFPSQRATRFLAKKLNQSQEYIRENLVNIEINYSDLNYKITQQQKAVSVPELLADVGGQLGLFCGASLITIIEIIEYFFTNFYWVLIFFLLKILETIQRTSPPQAV.

Positions 1-30 (MEHTEKSQVHAEKGLLGKIKRYLSKRPLPS) are binds the plasma membrane and stabilizes the channel in the closed state. Residues 1–61 (MEHTEKSQVH…NIAQNQNKVR (61 aa)) are Cytoplasmic-facing. A helical membrane pass occupies residues 62–82 (KVIWLAVVLGSVSLLVWQIYS). Topologically, residues 83–459 (RLVNYFTWPT…GLFCGASLIT (377 aa)) are extracellular. Intrachain disulfides connect cysteine 112–cysteine 207, cysteine 185–cysteine 192, cysteine 298–cysteine 377, cysteine 315–cysteine 373, cysteine 328–cysteine 350, and cysteine 330–cysteine 342. N-linked (GlcNAc...) asparagine glycosylation is found at asparagine 147, asparagine 163, and asparagine 179. N-linked (GlcNAc...) asparagine glycans are attached at residues asparagine 370, asparagine 405, and asparagine 421. The GAS motif; ion selectivity filter signature appears at 454–456 (GAS). Residues 460-480 (IIEIIEYFFTNFYWVLIFFLL) form a helical membrane-spanning segment. At 481-495 (KILETIQRTSPPQAV) the chain is on the cytoplasmic side.

The protein belongs to the amiloride-sensitive sodium channel (TC 1.A.6) family. ASIC5 subfamily. As to quaternary structure, forms homotrimeric channels. Expressed by cholangiocytes (at protein level). Detected in cerebellum, brainstem, kidney, liver, hepatocytes, lung, intestine and embryo. In the cerebellum, restricted to interneurons in the granular layer, specifically in GRM1-expressing unipolar brush cells of the vestibulocerebellum.

The protein resides in the apical cell membrane. It localises to the cell membrane. The enzyme catalyses Na(+)(in) = Na(+)(out). It carries out the reaction Li(+)(in) = Li(+)(out). It catalyses the reaction K(+)(in) = K(+)(out). The catalysed reaction is H(+)(in) = H(+)(out). Inhibited by the diuretic drug amiloride. Contrary to its rat ortholog it is not inhibited by Ca(2+). Functionally, forms bile acid-gated sodium channels and may play a role in bile acid-dependent absorption and secretion by epithelial cells of the bile ducts. Displays high selectivity for sodium ions but can also permit the permeation of other cations. The gating could be indirect and the consequence of alterations of the membrane environment of the channel by bile acids. As a sodium channel of type II unipolar brush cells of the vestibulocerebellum, controlling the electrical activity of these cells, could play a role in motor coordination and balance. This chain is Bile acid-sensitive ion channel, found in Mus musculus (Mouse).